The primary structure comprises 268 residues: L-aspartate dehydrogenase (268 aa).

NAD(+) contacts are provided by alanine 125 and asparagine 191. Residue histidine 221 is part of the active site.

The protein belongs to the L-aspartate dehydrogenase family.

It catalyses the reaction L-aspartate + NADP(+) + H2O = oxaloacetate + NH4(+) + NADPH + H(+). It carries out the reaction L-aspartate + NAD(+) + H2O = oxaloacetate + NH4(+) + NADH + H(+). The protein operates within cofactor biosynthesis; NAD(+) biosynthesis; iminoaspartate from L-aspartate (dehydrogenase route): step 1/1. Its function is as follows. Specifically catalyzes the NAD or NADP-dependent dehydrogenation of L-aspartate to iminoaspartate. In Brucella anthropi (strain ATCC 49188 / DSM 6882 / CCUG 24695 / JCM 21032 / LMG 3331 / NBRC 15819 / NCTC 12168 / Alc 37) (Ochrobactrum anthropi), this protein is L-aspartate dehydrogenase.